Here is a 487-residue protein sequence, read N- to C-terminus: Glycogen synthase 1 (487 aa).

K15 lines the ADP-alpha-D-glucose pocket.

Belongs to the glycosyltransferase 1 family. Bacterial/plant glycogen synthase subfamily.

The enzyme catalyses [(1-&gt;4)-alpha-D-glucosyl](n) + ADP-alpha-D-glucose = [(1-&gt;4)-alpha-D-glucosyl](n+1) + ADP + H(+). It participates in glycan biosynthesis; glycogen biosynthesis. Its function is as follows. Synthesizes alpha-1,4-glucan chains using ADP-glucose. The polypeptide is Glycogen synthase 1 (Nitrosococcus oceani (strain ATCC 19707 / BCRC 17464 / JCM 30415 / NCIMB 11848 / C-107)).